The chain runs to 363 residues: UDP-N-acetylglucosamine--N-acetylmuramyl-(pentapeptide) pyrophosphoryl-undecaprenol N-acetylglucosamine transferase (363 aa).

UDP-N-acetyl-alpha-D-glucosamine is bound by residues 10-12 (TGG), N124, S195, I250, and Q295.

The protein belongs to the glycosyltransferase 28 family. MurG subfamily.

It is found in the cell membrane. It catalyses the reaction di-trans,octa-cis-undecaprenyl diphospho-N-acetyl-alpha-D-muramoyl-L-alanyl-D-glutamyl-meso-2,6-diaminopimeloyl-D-alanyl-D-alanine + UDP-N-acetyl-alpha-D-glucosamine = di-trans,octa-cis-undecaprenyl diphospho-[N-acetyl-alpha-D-glucosaminyl-(1-&gt;4)]-N-acetyl-alpha-D-muramoyl-L-alanyl-D-glutamyl-meso-2,6-diaminopimeloyl-D-alanyl-D-alanine + UDP + H(+). It participates in cell wall biogenesis; peptidoglycan biosynthesis. In terms of biological role, cell wall formation. Catalyzes the transfer of a GlcNAc subunit on undecaprenyl-pyrophosphoryl-MurNAc-pentapeptide (lipid intermediate I) to form undecaprenyl-pyrophosphoryl-MurNAc-(pentapeptide)GlcNAc (lipid intermediate II). This chain is UDP-N-acetylglucosamine--N-acetylmuramyl-(pentapeptide) pyrophosphoryl-undecaprenol N-acetylglucosamine transferase, found in Listeria monocytogenes serotype 4a (strain HCC23).